Reading from the N-terminus, the 202-residue chain is NAD(P)H-quinone oxidoreductase chain 6 (202 aa).

5 helical membrane passes run 9–29, 32–52, 61–81, 98–118, and 144–164; these read VVSF…VVLA, IVYS…MYLL, AQVL…IMLV, VLTA…VLAT, and FLLP…GAII.

Belongs to the complex I subunit 6 family.

The protein localises to the membrane. It carries out the reaction a plastoquinone + NADH + (n+1) H(+)(in) = a plastoquinol + NAD(+) + n H(+)(out). The enzyme catalyses a plastoquinone + NADPH + (n+1) H(+)(in) = a plastoquinol + NADP(+) + n H(+)(out). Functionally, NDH-1 shuttles electrons from NAD(P)H, via FMN and iron-sulfur (Fe-S) centers, to quinones in the respiratory chain. The immediate electron acceptor for the enzyme in this species is believed to be plastoquinone. Couples the redox reaction to proton translocation (for every two electrons transferred, four hydrogen ions are translocated across the cytoplasmic membrane), and thus conserves the redox energy in a proton gradient. The polypeptide is NAD(P)H-quinone oxidoreductase chain 6 (ndhG) (Nostoc sp. (strain PCC 7120 / SAG 25.82 / UTEX 2576)).